We begin with the raw amino-acid sequence, 112 residues long: Large ribosomal subunit protein P2A (112 aa).

Residues 83 to 112 (GAAPAAEAKKEEKVEEKEESDDDMGFSLFD) are disordered. The span at 89 to 98 (EAKKEEKVEE) shows a compositional bias: basic and acidic residues.

The protein belongs to the eukaryotic ribosomal protein P1/P2 family. In terms of assembly, P1 and P2 exist as dimers at the large ribosomal subunit. In terms of processing, phosphorylated.

In terms of biological role, plays an important role in the elongation step of protein synthesis. The protein is Large ribosomal subunit protein P2A (RPP2A) of Zea mays (Maize).